A 151-amino-acid polypeptide reads, in one-letter code: Cell division protein SepF (151 aa).

It belongs to the SepF family. In terms of assembly, homodimer. Interacts with FtsZ.

It localises to the cytoplasm. Cell division protein that is part of the divisome complex and is recruited early to the Z-ring. Probably stimulates Z-ring formation, perhaps through the cross-linking of FtsZ protofilaments. Its function overlaps with FtsA. This Desulfitobacterium hafniense (strain Y51) protein is Cell division protein SepF.